Here is a 662-residue protein sequence, read N- to C-terminus: Chromosomal replication initiator protein DnaA (662 aa).

The tract at residues 1-93 is domain I, interacts with DnaA modulators; sequence MDDEQNVLAT…QVEGLGVRIA (93 aa). The segment at 93 to 322 is domain II; that stretch reads AAPATPTAER…STPAPANSSA (230 aa). The segment covering 96–105 has biased composition (low complexity); it reads ATPTAERAAA. A disordered region spans residues 96 to 294; it reads ATPTAERAAA…SDGPVERDDE (199 aa). Basic and acidic residues predominate over residues 114–123; sequence SRPERPRGER. The span at 166-199 shows a compositional bias: low complexity; it reads PPAAEYTPAAEYTPAAEYTPAAEYSPEPEYTPAT. Composition is skewed to basic and acidic residues over residues 236 to 248 and 261 to 290; these read TPRRDGHGPRRDA and PGDRPLRDTDRPLREPAAGHDVRESDGPVE. The segment at 323–539 is domain III, AAA+ region; the sequence is SLNAKYTFET…GALIRVTAFA (217 aa). Gly-367, Gly-369, Lys-370, and Thr-371 together coordinate ATP. The segment at 540 to 662 is domain IV, binds dsDNA; the sequence is SLNGQPLDLS…LTARIKQRSR (123 aa).

Belongs to the DnaA family. In terms of assembly, oligomerizes as a right-handed, spiral filament on DNA at oriC.

It localises to the cytoplasm. Plays an essential role in the initiation and regulation of chromosomal replication. ATP-DnaA binds to the origin of replication (oriC) to initiate formation of the DNA replication initiation complex once per cell cycle. Binds the DnaA box (a 9 base pair repeat at the origin) and separates the double-stranded (ds)DNA. Forms a right-handed helical filament on oriC DNA; dsDNA binds to the exterior of the filament while single-stranded (ss)DNA is stabiized in the filament's interior. The ATP-DnaA-oriC complex binds and stabilizes one strand of the AT-rich DNA unwinding element (DUE), permitting loading of DNA polymerase. After initiation quickly degrades to an ADP-DnaA complex that is not apt for DNA replication. Binds acidic phospholipids. This chain is Chromosomal replication initiator protein DnaA, found in Nocardia farcinica (strain IFM 10152).